The primary structure comprises 604 residues: Elongation factor 4 (604 aa).

The region spanning 2 to 184 (DHIRNFSIIA…AVITRMPAPR (183 aa)) is the tr-type G domain. GTP contacts are provided by residues 14–19 (DHGKST) and 131–134 (NKMD).

This sequence belongs to the TRAFAC class translation factor GTPase superfamily. Classic translation factor GTPase family. LepA subfamily.

It is found in the cell inner membrane. It catalyses the reaction GTP + H2O = GDP + phosphate + H(+). Its function is as follows. Required for accurate and efficient protein synthesis under certain stress conditions. May act as a fidelity factor of the translation reaction, by catalyzing a one-codon backward translocation of tRNAs on improperly translocated ribosomes. Back-translocation proceeds from a post-translocation (POST) complex to a pre-translocation (PRE) complex, thus giving elongation factor G a second chance to translocate the tRNAs correctly. Binds to ribosomes in a GTP-dependent manner. The protein is Elongation factor 4 of Methylibium petroleiphilum (strain ATCC BAA-1232 / LMG 22953 / PM1).